A 533-amino-acid polypeptide reads, in one-letter code: Decreased expression in renal and prostate cancer protein (533 aa).

The segment covering 1–12 has biased composition (basic and acidic residues); sequence MKEPRIFPRERP. Disordered regions lie at residues 1–31, 67–164, 177–259, and 299–350; these read MKEPRIFPRERPTPWTRAPLPPRGRLDGGPV, QNPS…PDPR, MRAG…RAGG, and ASGN…PNSA. Ser160 carries the phosphoserine modification. Polar residues predominate over residues 299 to 309; it reads ASGNMGTNPPT. Residue Arg368 is modified to Asymmetric dimethylarginine. Arg396 is modified (omega-N-methylarginine). The residue at position 432 (Ser432) is a Phosphoserine.

This sequence belongs to the DERPC family.

Its subcellular location is the nucleus. Potential tumor suppressor. The sequence is that of Decreased expression in renal and prostate cancer protein from Mus musculus (Mouse).